The primary structure comprises 248 residues: Pulmonary surfactant-associated protein A (248 aa).

An N-terminal signal peptide occupies residues 1–17 (MWLRCLALALTLLMVSG). N20 carries an N-linked (GlcNAc...) asparagine glycan. In terms of domain architecture, Collagen-like spans 28–100 (GNPGIPGTPG…PGERGPPGLP (73 aa)). A disordered region spans residues 29–103 (NPGIPGTPGS…RGPPGLPASL (75 aa)). P30, P33, P36, P42, P54, P57, P63, P67, and P70 each carry 4-hydroxyproline. The segment covering 42–51 (PGRDGRDGVK) has biased composition (basic and acidic residues). A compositionally biased stretch (pro residues) spans 54–65 (PGPPGPLGPPGG). Over residues 84 to 93 (ERGEKGEPGE) the composition is skewed to basic and acidic residues. The C-type lectin domain occupies 132–248 (LVVGRKVFSS…LQYRLAICEF (117 aa)). 2 disulfides stabilise this stretch: C155-C246 and C224-C238. N-linked (GlcNAc...) asparagine glycosylation occurs at N207. 3 residues coordinate Ca(2+): E215, R217, and N234.

It belongs to the SFTPA family. As to quaternary structure, oligomeric complex of 6 set of homotrimers.

Its subcellular location is the secreted. It localises to the extracellular space. The protein localises to the extracellular matrix. The protein resides in the surface film. Its function is as follows. In presence of calcium ions, it binds to surfactant phospholipids and contributes to lower the surface tension at the air-liquid interface in the alveoli of the mammalian lung and is essential for normal respiration. Enhances the expression of MYO18A/SP-R210 on alveolar macrophages. This is Pulmonary surfactant-associated protein A (SFTPA1) from Canis lupus familiaris (Dog).